The chain runs to 201 residues: Translation machinery-associated protein 22 (201 aa).

The SUI1 domain maps to 104 to 175 (VTVKRIERNK…EIKEFIVEKY (72 aa)).

Belongs to the DENR family. In terms of assembly, interacts with the 40S ribosomal subunit.

The protein resides in the cytoplasm. This chain is Translation machinery-associated protein 22 (TMA22), found in Pyricularia oryzae (strain 70-15 / ATCC MYA-4617 / FGSC 8958) (Rice blast fungus).